The sequence spans 309 residues: MTLYDLLELPQTATLQEIKTAYKRLAKRYHPDINKQGADTFVKINNAYAVLSDTTQKAEYDAMLRFSEFEDRVKRLDFSIKWHEQFMEELQFHHNWDFDFIRNREYTQPTPTNNKYSSFLDKDVSLAFYQLYSKGKLDFDLEDTLLRRHSIKQAFLKGKKLNDVLKEQYNYLGWLEAKRYFNIDVEIELTPKEVREGGVVNLPLKIKVISNNYPGQMWYELNKNYSFRLLWDIKNGEVAEFFGKGNRALGWRGDLIVRMRIVDKIKKRLRIFSSHFEQDKTKLWFLVPQDKQDNPNKWVFDYKTHEFIV.

The J domain maps to 1-66 (MTLYDLLELP…KAEYDAMLRF (66 aa)).

In Mycoplasma pneumoniae (strain ATCC 29342 / M129 / Subtype 1) (Mycoplasmoides pneumoniae), this protein is DnaJ-like protein MG002 homolog.